We begin with the raw amino-acid sequence, 150 residues long: MRAVVQRVLSASVAAGSSRHSEIGRGLLVLLGVAQGDTELEAEWMSRKIVQLRIFDDAAGRMNLPVRDTGGDILLVSQFTLYGDASRGNRPGFSGSADFEKARPLYEKAVRSIEQHLGKPVMTGWYGEAMQVALINDGPVTLILDTPQRL.

The short motif at 138–139 (GP) is the Gly-cisPro motif, important for rejection of L-amino acids element.

It belongs to the DTD family. In terms of assembly, homodimer.

It is found in the cytoplasm. The catalysed reaction is glycyl-tRNA(Ala) + H2O = tRNA(Ala) + glycine + H(+). It catalyses the reaction a D-aminoacyl-tRNA + H2O = a tRNA + a D-alpha-amino acid + H(+). Functionally, an aminoacyl-tRNA editing enzyme that deacylates mischarged D-aminoacyl-tRNAs. Also deacylates mischarged glycyl-tRNA(Ala), protecting cells against glycine mischarging by AlaRS. Acts via tRNA-based rather than protein-based catalysis; rejects L-amino acids rather than detecting D-amino acids in the active site. By recycling D-aminoacyl-tRNA to D-amino acids and free tRNA molecules, this enzyme counteracts the toxicity associated with the formation of D-aminoacyl-tRNA entities in vivo and helps enforce protein L-homochirality. In Chlorobium limicola (strain DSM 245 / NBRC 103803 / 6330), this protein is D-aminoacyl-tRNA deacylase.